A 194-amino-acid chain; its full sequence is Factor in the germline alpha (194 aa).

One can recognise a bHLH domain in the interval 59–111; sequence ERRRVANAKERERIKNLNRGFAKLKALVPFLPQSRKPSKVDILKGATEYIQIL. Residues 121–137 are compositionally biased toward basic and acidic residues; sequence SEKQSPEEQTHSGRPSD. The tract at residues 121 to 163 is disordered; sequence SEKQSPEEQTHSGRPSDPHVSSTRELLGNATQPTSCASGLKKE. A compositionally biased stretch (polar residues) spans 139–157; that stretch reads HVSSTRELLGNATQPTSCA.

As to quaternary structure, heterodimer with TCF3/isoform E12. In terms of tissue distribution, expressed only in the oocytes within the ovary and at lower level in the testis. Found in the resting oocytes of the primordial follicle cells, at the periphery of the ovary and in the hilar region. Also detected in growing oocytes, but at lower levels.

It localises to the nucleus. In terms of biological role, germ-line specific transcription factor implicated in postnatal oocyte-specific gene expression. Plays a key regulatory role in the expression of multiple oocyte-specific genes, including those that initiate folliculogenesis and those that encode the zona pellucida (ZP1, ZP2 and ZP3) required for fertilization and early embryonic survival. Essential for oocytes to survive and form primordial follicles. The persistence of FIGLA in adult females suggests that it may regulate additional pathways that are essential for normal ovarian development. Binds to the E-box (5'-CANNTG-3') of the ZPs (ZP1, ZP2, ZP3) promoters. In Mus musculus (Mouse), this protein is Factor in the germline alpha (Figla).